Consider the following 273-residue polypeptide: Ribosomal RNA small subunit methyltransferase A (273 aa).

Residues N18, L20, G45, E66, D91, and N113 each coordinate S-adenosyl-L-methionine.

Belongs to the class I-like SAM-binding methyltransferase superfamily. rRNA adenine N(6)-methyltransferase family. RsmA subfamily.

The protein resides in the cytoplasm. The catalysed reaction is adenosine(1518)/adenosine(1519) in 16S rRNA + 4 S-adenosyl-L-methionine = N(6)-dimethyladenosine(1518)/N(6)-dimethyladenosine(1519) in 16S rRNA + 4 S-adenosyl-L-homocysteine + 4 H(+). In terms of biological role, specifically dimethylates two adjacent adenosines (A1518 and A1519) in the loop of a conserved hairpin near the 3'-end of 16S rRNA in the 30S particle. May play a critical role in biogenesis of 30S subunits. The protein is Ribosomal RNA small subunit methyltransferase A of Escherichia coli (strain 55989 / EAEC).